The sequence spans 274 residues: Cyclase-like protein 1 (274 aa).

Residues 1-18 form the signal peptide; it reads MAASRLALLLLVLAVAAA.

It belongs to the Cyclase 1 superfamily. Highly expressed in leaf sheaths. Expressed in leaf collars.

It is found in the secreted. It localises to the extracellular space. The protein resides in the extracellular matrix. May be involved in response to stresses. This Oryza sativa subsp. japonica (Rice) protein is Cyclase-like protein 1.